A 266-amino-acid polypeptide reads, in one-letter code: Protein PAE0875 (266 aa).

It belongs to the CinA family.

The protein is Protein PAE0875 of Pyrobaculum aerophilum (strain ATCC 51768 / DSM 7523 / JCM 9630 / CIP 104966 / NBRC 100827 / IM2).